We begin with the raw amino-acid sequence, 360 residues long: UDP-N-acetylglucosamine--N-acetylmuramyl-(pentapeptide) pyrophosphoryl-undecaprenol N-acetylglucosamine transferase (360 aa).

Residues threonine 13 to glycine 15, arginine 164, serine 192, and glutamine 293 each bind UDP-N-acetyl-alpha-D-glucosamine.

It belongs to the glycosyltransferase 28 family. MurG subfamily.

It is found in the cell inner membrane. The enzyme catalyses di-trans,octa-cis-undecaprenyl diphospho-N-acetyl-alpha-D-muramoyl-L-alanyl-D-glutamyl-meso-2,6-diaminopimeloyl-D-alanyl-D-alanine + UDP-N-acetyl-alpha-D-glucosamine = di-trans,octa-cis-undecaprenyl diphospho-[N-acetyl-alpha-D-glucosaminyl-(1-&gt;4)]-N-acetyl-alpha-D-muramoyl-L-alanyl-D-glutamyl-meso-2,6-diaminopimeloyl-D-alanyl-D-alanine + UDP + H(+). It participates in cell wall biogenesis; peptidoglycan biosynthesis. Its function is as follows. Cell wall formation. Catalyzes the transfer of a GlcNAc subunit on undecaprenyl-pyrophosphoryl-MurNAc-pentapeptide (lipid intermediate I) to form undecaprenyl-pyrophosphoryl-MurNAc-(pentapeptide)GlcNAc (lipid intermediate II). In Chromobacterium violaceum (strain ATCC 12472 / DSM 30191 / JCM 1249 / CCUG 213 / NBRC 12614 / NCIMB 9131 / NCTC 9757 / MK), this protein is UDP-N-acetylglucosamine--N-acetylmuramyl-(pentapeptide) pyrophosphoryl-undecaprenol N-acetylglucosamine transferase.